The primary structure comprises 366 residues: Flagellar P-ring protein (366 aa).

The N-terminal stretch at 1–20 (MVIKFLSALILLLVTTAAQA) is a signal peptide.

Belongs to the FlgI family. The basal body constitutes a major portion of the flagellar organelle and consists of four rings (L,P,S, and M) mounted on a central rod.

The protein resides in the periplasm. It is found in the bacterial flagellum basal body. Functionally, assembles around the rod to form the L-ring and probably protects the motor/basal body from shearing forces during rotation. This chain is Flagellar P-ring protein, found in Escherichia coli (strain UTI89 / UPEC).